Reading from the N-terminus, the 500-residue chain is Guanosine-5'-triphosphate,3'-diphosphate pyrophosphatase (500 aa).

It belongs to the GppA/Ppx family. GppA subfamily.

The enzyme catalyses guanosine 3'-diphosphate 5'-triphosphate + H2O = guanosine 3',5'-bis(diphosphate) + phosphate + H(+). It functions in the pathway purine metabolism; ppGpp biosynthesis; ppGpp from GTP: step 2/2. In terms of biological role, catalyzes the conversion of pppGpp to ppGpp. Guanosine pentaphosphate (pppGpp) is a cytoplasmic signaling molecule which together with ppGpp controls the 'stringent response', an adaptive process that allows bacteria to respond to amino acid starvation, resulting in the coordinated regulation of numerous cellular activities. This Photorhabdus laumondii subsp. laumondii (strain DSM 15139 / CIP 105565 / TT01) (Photorhabdus luminescens subsp. laumondii) protein is Guanosine-5'-triphosphate,3'-diphosphate pyrophosphatase.